The chain runs to 346 residues: D-alanine--D-alanine ligase (346 aa).

The 207-residue stretch at 134 to 340 (KFLAESLGVK…IDYTYIHSIQ (207 aa)) folds into the ATP-grasp domain. 161 to 212 (EYPVIIKPVRLGSSIGVSIVKSEAELDYALDVAFEFDNDVIVEPFIDGVKEF) contacts ATP. Residues Asp284, Glu296, and Asn298 each contribute to the Mg(2+) site.

It belongs to the D-alanine--D-alanine ligase family. Requires Mg(2+) as cofactor. Mn(2+) is required as a cofactor.

Its subcellular location is the cytoplasm. It carries out the reaction 2 D-alanine + ATP = D-alanyl-D-alanine + ADP + phosphate + H(+). It functions in the pathway cell wall biogenesis; peptidoglycan biosynthesis. Its function is as follows. Cell wall formation. In Sulfurovum sp. (strain NBC37-1), this protein is D-alanine--D-alanine ligase.